The chain runs to 598 residues: Arginine--tRNA ligase (598 aa).

A 'HIGH' region motif is present at residues 131-141 (ANPTGPMHVGH). The interval 288-309 (KLPPPKSKKGQPPPQPQPDEEG) is disordered.

This sequence belongs to the class-I aminoacyl-tRNA synthetase family. Monomer.

The protein resides in the cytoplasm. The catalysed reaction is tRNA(Arg) + L-arginine + ATP = L-arginyl-tRNA(Arg) + AMP + diphosphate. The chain is Arginine--tRNA ligase from Anaeromyxobacter dehalogenans (strain 2CP-1 / ATCC BAA-258).